The chain runs to 291 residues: uncharacterized protein (291 aa).

One can recognise an HTH tetR-type domain in the interval 2–62 (KEKEKLIIET…SMLNYYYDKT (61 aa)). The segment at residues 25–44 (SVQEIAKECKISKGAFYIYF) is a DNA-binding region (H-T-H motif).

This is an uncharacterized protein from Bacillus subtilis (strain 168).